The sequence spans 677 residues: WD repeat-containing protein 48 (677 aa).

At Y28 the chain carries Phosphotyrosine. WD repeat units lie at residues 28 to 67, 73 to 112, 115 to 154, 166 to 205, 208 to 247, 250 to 289, 292 to 334, and 358 to 397; these read YNRN…QDPY, HHTD…CMST, THKD…ALTA, GNKD…KLMK, GHTD…CIAT, VHDE…IRVL, EEKA…NFRA, and KGGA…KVED. At K214 the chain carries N6-acetyllysine. K578 is subject to N6-acetyllysine. The disordered stretch occupies residues 607–628; the sequence is LDNESQTTSSSNNEKPGEQEKE. Residues 609–620 show a composition bias toward low complexity; the sequence is NESQTTSSSNNE. The residue at position 613 (T613) is a Phosphothreonine.

It belongs to the WD repeat WDR48 family. In terms of assembly, interacts with USP46. Interacts with USP1. Interacts with USP12. Component of the USP12-WDR20-WDR48 deubiquitinating complex. Component of the USP12-DMWD-WDR48 deubiquitinating complex. Interacts with PHLPP1. Interacts with RAD51AP1; the interaction is direct and promotes formation of a trimeric complex with RAD51 via RAD51AP1. Interacts with ATAD5; the interaction regulates USP1-mediated PCNA deubiquitination. Interacts with RAD51; the interaction is enhanced under replication stress. Interacts with ITCH; the interaction is more efficient when both USP12 and WDR48/UAF1 are involved and may facilitate recruitment of the USP12 deubiquitinating complex to Notch.

It is found in the nucleus. It localises to the cytoplasm. The protein localises to the lysosome. The protein resides in the late endosome. Functionally, regulator of deubiquitinating complexes, which acts as a strong activator of USP1, USP12 and USP46. Enhances the USP1-mediated deubiquitination of FANCD2; USP1 being almost inactive by itself. Activates deubiquitination by increasing the catalytic turnover without increasing the affinity of deubiquitinating enzymes for the substrate. Also activates deubiquitinating activity of complexes containing USP12. Docks at the distal end of the USP12 fingers domain and induces a cascade of structural changes leading to the activation of the enzyme. Together with RAD51AP1, promotes DNA repair by stimulating RAD51-mediated homologous recombination. Binds single-stranded DNA (ssDNA) and double-stranded DNA (dsDNA). DNA-binding is required both for USP1-mediated deubiquitination of FANCD2 and stimulation of RAD51-mediated homologous recombination: both WDR48/UAF1 and RAD51AP1 have coordinated role in DNA-binding during these processes. Together with ATAD5 and by regulating USP1 activity, has a role in PCNA-mediated translesion synthesis (TLS) by deubiquitinating monoubiquitinated PCNA. Together with ATAD5, has a role in recruiting RAD51 to stalled forks during replication stress. This is WD repeat-containing protein 48 (WDR48) from Bos taurus (Bovine).